Here is a 415-residue protein sequence, read N- to C-terminus: uncharacterized protein (415 aa).

Positions 179-199 (SPAPCSPAPGSPPPPAPPAAP) are enriched in pro residues. The interval 179–200 (SPAPCSPAPGSPPPPAPPAAPA) is disordered.

This sequence belongs to the herpesviridae BTRF1 family.

This is an uncharacterized protein from Equus caballus (Horse).